Reading from the N-terminus, the 388-residue chain is N-acetylneuraminate epimerase (388 aa).

The first 26 residues, 1–26 (MFSLIGAKRQAIGIAALAWSTGAVMA), serve as a signal peptide directing secretion. Kelch repeat units follow at residues 48–92 (MAYV…AAAG), 94–147 (KIFA…VGLA), 149–186 (GRIA…KLVD), 187–232 (SYMG…ATMG), 236–285 (FLLV…VAGA), 307–356 (ANAA…DAPG), and 358–387 (LLVV…LSVE).

The protein belongs to the NanM family. As to quaternary structure, homodimer.

Its subcellular location is the periplasm. It catalyses the reaction N-acetyl-alpha-neuraminate = N-acetyl-beta-neuraminate. Functionally, converts alpha-N-acetylneuranimic acid (Neu5Ac) to the beta-anomer, accelerating the equilibrium between the alpha- and beta-anomers. Probably facilitates sialidase-negative bacteria to compete successfully for limited amounts of extracellular Neu5Ac, which is likely taken up in the beta-anomer. In addition, the rapid removal of sialic acid from solution might be advantageous to the bacterium to damp down host responses. The protein is N-acetylneuraminate epimerase of Brucella suis (strain ATCC 23445 / NCTC 10510).